The primary structure comprises 488 residues: Transmembrane protein 39A (488 aa).

N-linked (GlcNAc...) asparagine glycans are attached at residues N31 and N39. The next 8 membrane-spanning stretches (helical) occupy residues 72-92 (SLLFEFLFFIYLLVALFIQYI), 110-130 (TSLNFHLIDYHLAAFITVMLA), 154-174 (VLISARLVLLTLCGWVLCWTL), 182-202 (SVLNLLFLGYPFGVYVPLCCF), 287-307 (EVLFNSLFSAYYVAFLPLCFV), 319-339 (CEHLIMVWINAFVMLTTQLLP), 420-440 (LLNLLILIEGSVVFYQLYSLL), and 446-466 (NHTLSMALILFCNYYVLFKLL).

This sequence belongs to the TMEM39 family. Interacts with SACM1L, SEC23A and SEC24A. As to quaternary structure, (Microbial infection) Interacts with encephalomyocarditis virus (EMCV) major capsid proteins VP1 and VP2. In terms of tissue distribution, up-regulated in brain tumor glioblastoma multiforme cells (at protein level).

The protein localises to the endoplasmic reticulum membrane. Regulates autophagy by controlling the spatial distribution and levels of the intracellular phosphatidylinositol 4-phosphate (PtdIns(4)P) pools. Modulates (PtdIns(4)P) levels by regulating the ER-to-Golgi trafficking of the phosphatidylinositide phosphatase SACM1L. In terms of biological role, (Microbial infection) Positively regulates the replication of encephalomyocarditis virus (EMCV) via autophagy-dependent pathway. The protein is Transmembrane protein 39A (TMEM39A) of Homo sapiens (Human).